The chain runs to 986 residues: Translation initiation factor IF-2 (986 aa).

The segment at 95 to 394 (TFVRRDETSA…GRGKHQDQNT (300 aa)) is disordered. The segment covering 122–182 (ELQRREEEAR…EEEAAKKRAA (61 aa)) has biased composition (basic and acidic residues). The span at 183 to 222 (AEAAAREQAQAAKPAQAAQPAAAKAEPVAAKAAEPAVAKQ) shows a compositional bias: low complexity. Basic and acidic residues predominate over residues 228-277 (ERAAAERAAQREAAKKAEDAARQAAEKARAEQEQIAKRRAAAEAEARAIR). Positions 320–342 (APSRPAAKKPAAAAPAATTTPSA) are enriched in low complexity. A compositionally biased stretch (gly residues) spans 371 to 384 (TSGGVDRGWRGGPK). Residues 486–655 (PRPPVVTVMG…LLQAEVLELK (170 aa)) form the tr-type G domain. The interval 495–502 (GHVDHGKT) is G1. 495 to 502 (GHVDHGKT) is a binding site for GTP. The tract at residues 520 to 524 (GITQH) is G2. The G3 stretch occupies residues 541 to 544 (DTPG). GTP contacts are provided by residues 541–545 (DTPGH) and 595–598 (NKID). Positions 595 to 598 (NKID) are G4. Positions 631–633 (SAK) are G5.

The protein belongs to the TRAFAC class translation factor GTPase superfamily. Classic translation factor GTPase family. IF-2 subfamily.

Its subcellular location is the cytoplasm. Functionally, one of the essential components for the initiation of protein synthesis. Protects formylmethionyl-tRNA from spontaneous hydrolysis and promotes its binding to the 30S ribosomal subunits. Also involved in the hydrolysis of GTP during the formation of the 70S ribosomal complex. This chain is Translation initiation factor IF-2, found in Paraburkholderia phytofirmans (strain DSM 17436 / LMG 22146 / PsJN) (Burkholderia phytofirmans).